The chain runs to 357 residues: 4-hydroxy-3-methylbut-2-en-1-yl diphosphate synthase (flavodoxin) (357 aa).

[4Fe-4S] cluster is bound by residues Cys264, Cys267, Cys299, and Glu306.

This sequence belongs to the IspG family. [4Fe-4S] cluster is required as a cofactor.

The enzyme catalyses (2E)-4-hydroxy-3-methylbut-2-enyl diphosphate + oxidized [flavodoxin] + H2O + 2 H(+) = 2-C-methyl-D-erythritol 2,4-cyclic diphosphate + reduced [flavodoxin]. The protein operates within isoprenoid biosynthesis; isopentenyl diphosphate biosynthesis via DXP pathway; isopentenyl diphosphate from 1-deoxy-D-xylulose 5-phosphate: step 5/6. Functionally, converts 2C-methyl-D-erythritol 2,4-cyclodiphosphate (ME-2,4cPP) into 1-hydroxy-2-methyl-2-(E)-butenyl 4-diphosphate. The chain is 4-hydroxy-3-methylbut-2-en-1-yl diphosphate synthase (flavodoxin) from Campylobacter jejuni subsp. jejuni serotype O:2 (strain ATCC 700819 / NCTC 11168).